A 375-amino-acid polypeptide reads, in one-letter code: Queuine tRNA-ribosyltransferase (375 aa).

Aspartate 89 functions as the Proton acceptor in the catalytic mechanism. Substrate contacts are provided by residues 89–93 (DSGGF), aspartate 143, glutamine 187, and glycine 214. An RNA binding region spans residues 245–251 (GVGKPED). Residue aspartate 264 is the Nucleophile of the active site. The segment at 269-273 (TRNAR) is RNA binding; important for wobble base 34 recognition. Zn(2+)-binding residues include cysteine 302, cysteine 304, cysteine 307, and histidine 333.

Belongs to the queuine tRNA-ribosyltransferase family. Homodimer. Within each dimer, one monomer is responsible for RNA recognition and catalysis, while the other monomer binds to the replacement base PreQ1. Zn(2+) is required as a cofactor.

It carries out the reaction 7-aminomethyl-7-carbaguanine + guanosine(34) in tRNA = 7-aminomethyl-7-carbaguanosine(34) in tRNA + guanine. It functions in the pathway tRNA modification; tRNA-queuosine biosynthesis. Catalyzes the base-exchange of a guanine (G) residue with the queuine precursor 7-aminomethyl-7-deazaguanine (PreQ1) at position 34 (anticodon wobble position) in tRNAs with GU(N) anticodons (tRNA-Asp, -Asn, -His and -Tyr). Catalysis occurs through a double-displacement mechanism. The nucleophile active site attacks the C1' of nucleotide 34 to detach the guanine base from the RNA, forming a covalent enzyme-RNA intermediate. The proton acceptor active site deprotonates the incoming PreQ1, allowing a nucleophilic attack on the C1' of the ribose to form the product. After dissociation, two additional enzymatic reactions on the tRNA convert PreQ1 to queuine (Q), resulting in the hypermodified nucleoside queuosine (7-(((4,5-cis-dihydroxy-2-cyclopenten-1-yl)amino)methyl)-7-deazaguanosine). In Citrobacter koseri (strain ATCC BAA-895 / CDC 4225-83 / SGSC4696), this protein is Queuine tRNA-ribosyltransferase.